The sequence spans 568 residues: MEKYENLGLVGEGSYGMVMKCRNKDSGRIVAIKKFLESDDDKMVKKIAMREIKLLKQLRHENLVNLLEVCKKKKRWYLVFEFVDHTILDDLKLFPNGLDYQVVQKYLFQIINGIGFCHSHNIIHRDIKPENILVSQSGVVKLCDFGFARTLAAPGEVYTDYVATRWYRAPELLVGDVKYGKAVDIWAIGCLVIEMLMGQPLFPGESDIDQLHHIMTCLGNLIPRHQELFYKNPVFAGVRLPEVKDAEAEPLESRYPKLPEAVISLAKKCLHIDPDKRPFCADLLRHDFFQMDGFAERFSQELQLKIEKDARNNSLPKKSQNRKKEKDDALGEERKTLVVQDTNADPKIKDSKVFKVKGSKIDVEKMEKGSRASNANCLHDNGTNHKGLASTSLRDCSNVNIDHSRNPGTAIPPLTHNLSAVAPGINAGMGTIPGVQNYRVDEKTKKYCNPFVKPNQPPPAGIYNMNVSTSVSGEKYLLQANKKRKEYPKADVRLPELNYNHLPELRALEGIARNSRLIKKENKCLSESRIPSLAAIDLHVSSVASHQGAGSPLSDDSEADLPRMEHQH.

A Protein kinase domain is found at Tyr4–Phe289. ATP contacts are provided by residues Val10–Val18 and Lys33. Residues Lys45–Glu51 carry the [NKR]KIAxRE motif. Asp126 (proton acceptor) is an active-site residue. Disordered stretches follow at residues Asp309–Glu333 and Ser545–His568. A compositionally biased stretch (basic and acidic residues) spans Arg322–Glu333.

This sequence belongs to the protein kinase superfamily. CMGC Ser/Thr protein kinase family. CDC2/CDKX subfamily. Expressed in testis, kidney, lung and brain.

Its subcellular location is the cytoplasm. It localises to the nucleus. It carries out the reaction L-seryl-[protein] + ATP = O-phospho-L-seryl-[protein] + ADP + H(+). It catalyses the reaction L-threonyl-[protein] + ATP = O-phospho-L-threonyl-[protein] + ADP + H(+). The polypeptide is Cyclin-dependent kinase-like 2 (Mus musculus (Mouse)).